A 347-amino-acid polypeptide reads, in one-letter code: O-methyltransferase aunE (347 aa).

An S-adenosyl-L-methionine-binding site is contributed by tryptophan 166. The active-site Proton acceptor is the histidine 265.

The protein belongs to the class I-like SAM-binding methyltransferase superfamily. Cation-independent O-methyltransferase family.

Its pathway is secondary metabolite biosynthesis. In terms of biological role, O-methyltransferase; part of the gene cluster that mediates the biosynthesis of aurasperone B, a dimeric gamma-naphthopyrone. The first step in the biosynthesis of aurasperone B is the production of gamma-naphthopyrone precursor YWA1 by the non-reducing polyketide synthase albA, via condensation of one acetyl-CoA starter unit with 6 malonyl-CoA units. YWA1 is then methylated by aunE at position C-6 to yield foncesin which is further methylated at position C-8 by aunD to produce fonsecin B. A key enzyme in the biosynthetic pathway is the cytochrome P450 monooxygenase aunB which catalyzes the oxidative dimerization of fonsecin B to aurasperone B. AunB also catalyzes the oxidative dimerization of rubrofusarin B into aurasperone A. The polypeptide is O-methyltransferase aunE (Aspergillus niger (strain ATCC 1015 / CBS 113.46 / FGSC A1144 / LSHB Ac4 / NCTC 3858a / NRRL 328 / USDA 3528.7)).